A 273-amino-acid polypeptide reads, in one-letter code: Type II methyltransferase M2.MboI (273 aa).

This sequence belongs to the N(4)/N(6)-methyltransferase family.

It catalyses the reaction a 2'-deoxyadenosine in DNA + S-adenosyl-L-methionine = an N(6)-methyl-2'-deoxyadenosine in DNA + S-adenosyl-L-homocysteine + H(+). In terms of biological role, a beta subtype methylase that recognizes the double-stranded sequence 5'-GATC-3', methylates A-2 on both strands, and protects the DNA from cleavage by the MboI endonuclease. This seems to be a weaker methylase than M1.MboI. This chain is Type II methyltransferase M2.MboI (mboIBM), found in Moraxella bovis.